The chain runs to 35 residues: uncharacterized protein (35 aa).

A helical membrane pass occupies residues 14–34 (LAHLIGIIYLIIILGTLVMLF).

The protein resides in the endoplasmic reticulum membrane. This is an uncharacterized protein from Saccharomyces cerevisiae (strain ATCC 204508 / S288c) (Baker's yeast).